We begin with the raw amino-acid sequence, 376 residues long: Alpha-ketoglutarate-dependent dioxygenase esdpJ (376 aa).

Fe cation is bound by residues histidine 145 and aspartate 147. Threonine 202 is a 2-oxoglutarate binding site. Residues 234–260 (YNQSSQEKKSEIHVEPRGSPNNVGSDL) are disordered. Residues 239–249 (QEKKSEIHVEP) show a composition bias toward basic and acidic residues. Histidine 335 is a binding site for Fe cation. Arginine 347 and arginine 351 together coordinate 2-oxoglutarate. The segment at 354–376 (GVGEQPYLDPESKTRREALGEFN) is disordered. The segment covering 363–376 (PESKTRREALGEFN) has biased composition (basic and acidic residues).

It belongs to the TfdA dioxygenase family. Fe(2+) is required as a cofactor.

In terms of biological role, alpha-ketoglutarate-dependent dioxygenas; part of the cluster that mediates the biosynthesis of shearones, diterpenoid pyrones (DPs) which are structurally diverse meroterpenoids consisting of a diterpene linked by a pyrone, and which may exhibit a range of bioactivities. The alpha-ketoglutarate-dependent dioxygenase esdpJ seems not to be involved in this pathway. The molecular scaffold is commonly biosynthesized by a series of enzymes including the non-reducing polyketide synthase (NR-PKS) esdpA that generates an alpha-pyrone; the prenyltransferase esdpC that attaches a geranylgeranyl pyrophosphate (GGPP) produced by the GGPP synthase (GGPPS) esdpD onto the pyrone unit; the FAD-dependent monooxygenase esdpE that converts an olefin on the diterpene unit into an epoxide; and the terpene cyclase esdpB that catalyzes the cyclization reactions to give the molecular backbone shearone A. In the modification steps, esdpF oxidizes the hydroxy group to a ketone at C-3 and esdpG then attaches hydroxy groups at both C-11 and C-12. After that, esdpI hydroxylates at C-20 and esdpH hydroxylates at C-6'. The ether bridge is generated by nucleophilic attack of the hydroxy group at C-20 to the carbonyl carbon at C-3. EsdpH can also functions prior to esdpI. The different combinations of these modification enzymes lead to the production of diverse shearone derivatives, shearone I being the end product of the pathway. This chain is Alpha-ketoglutarate-dependent dioxygenase esdpJ, found in Penicillium shearii (Eupenicillium shearii).